A 109-amino-acid polypeptide reads, in one-letter code: Spermidine export protein MdtI (109 aa).

A run of 4 helical transmembrane segments spans residues 6–26 (WIHA…NVFL), 36–56 (WFGL…SQAV), 64–84 (AYAL…WVLF), and 88–108 (LNRK…MIKL).

Belongs to the drug/metabolite transporter (DMT) superfamily. Small multidrug resistance (SMR) (TC 2.A.7.1) family. MdtI subfamily. Forms a complex with MdtJ.

Its subcellular location is the cell inner membrane. Catalyzes the excretion of spermidine. The sequence is that of Spermidine export protein MdtI from Enterobacter sp. (strain 638).